The primary structure comprises 58 residues: Conotoxin Ar5.4 (58 aa).

Positions 1-20 are excised as a propeptide; that stretch reads RIQSDLIRAALEDADMKNEK.

The protein belongs to the conotoxin T superfamily. In terms of processing, contains 2 disulfide bonds that can be either 'C1-C3, C2-C4' or 'C1-C4, C2-C3', since these disulfide connectivities have been observed for conotoxins with cysteine framework V (for examples, see AC P0DQQ7 and AC P81755). As to expression, expressed by the venom duct.

The protein resides in the secreted. This chain is Conotoxin Ar5.4, found in Conus arenatus (Sand-dusted cone).